The primary structure comprises 325 residues: Large ribosomal subunit protein uL18 (325 aa).

The interval 247 to 300 is disordered; it reads IRIPPSRRNPRRRSPRSGGRWPSCRSPPARRRSRSTRPTSWPRSRPTSKPKRPR. Low complexity-rich tracts occupy residues 262–273 and 282–291; these read RSGGRWPSCRSP and TRPTSWPRSR.

This sequence belongs to the universal ribosomal protein uL18 family. As to quaternary structure, component of the large ribosomal subunit (LSU).

The protein localises to the cytoplasm. Its subcellular location is the nucleus. Functionally, component of the ribosome, a large ribonucleoprotein complex responsible for the synthesis of proteins in the cell. The small ribosomal subunit (SSU) binds messenger RNAs (mRNAs) and translates the encoded message by selecting cognate aminoacyl-transfer RNA (tRNA) molecules. The large subunit (LSU) contains the ribosomal catalytic site termed the peptidyl transferase center (PTC), which catalyzes the formation of peptide bonds, thereby polymerizing the amino acids delivered by tRNAs into a polypeptide chain. The nascent polypeptides leave the ribosome through a tunnel in the LSU and interact with protein factors that function in enzymatic processing, targeting, and the membrane insertion of nascent chains at the exit of the ribosomal tunnel. The chain is Large ribosomal subunit protein uL18 (RpL5) from Anopheles gambiae (African malaria mosquito).